The chain runs to 44 residues: Thymosin beta (44 aa).

Basic and acidic residues predominate over residues 1–17 (MSDKPDVKEVESFDKTT). Residues 1–44 (MSDKPDVKEVESFDKTTLKKTTTNEKNTLPTKEVIEQEKSGGSD) form a disordered region. A compositionally biased stretch (low complexity) spans 19–32 (KKTTTNEKNTLPTK). A compositionally biased stretch (basic and acidic residues) spans 33–44 (EVIEQEKSGGSD).

Belongs to the thymosin beta family.

Its subcellular location is the cytoplasm. It localises to the cytoskeleton. In terms of biological role, plays an important role in the organization of the cytoskeleton. Binds to and sequesters actin monomers (G actin) and therefore inhibits actin polymerization. The sequence is that of Thymosin beta from Gillichthys mirabilis (Long-jawed mudsucker).